The sequence spans 92 residues: Probable acyl carrier protein (92 aa).

One can recognise a Carrier domain in the interval Gln11 to Val92. Ser49 is subject to O-(pantetheine 4'-phosphoryl)serine.

Post-translationally, 4'-phosphopantetheine is transferred from CoA to a specific serine of the apo-ACP-like protein.

Its function is as follows. Involved in developmentally regulated synthesis of a compound biosynthetically related to polyketide antibiotics which is essential for spore color in Streptomyces halstedii. The sequence is that of Probable acyl carrier protein (sch3) from Streptomyces halstedii.